We begin with the raw amino-acid sequence, 720 residues long: Putative glutamine--fructose-6-phosphate aminotransferase [isomerizing] (720 aa).

The active-site Nucleophile; for GATase activity is C2. The 320-residue stretch at 2 to 321 (CGIFGYCNFL…DNDTAHIYDG (320 aa)) folds into the Glutamine amidotransferase type-2 domain. The span at 266 to 280 (STTSTFNHGSSTETP) shows a compositional bias: polar residues. Positions 266-285 (STTSTFNHGSSTETPAENGL) are disordered. SIS domains lie at 393–532 (WLTE…DLVS) and 565–710 (CDKK…VDLP).

It catalyses the reaction D-fructose 6-phosphate + L-glutamine = D-glucosamine 6-phosphate + L-glutamate. It functions in the pathway nucleotide-sugar biosynthesis; UDP-N-acetyl-alpha-D-glucosamine biosynthesis; alpha-D-glucosamine 6-phosphate from D-fructose 6-phosphate: step 1/1. Its function is as follows. Involved in amino sugar synthesis (formation of chitin, supplies the amino sugars of asparagine-linked oligosaccharides of glycoproteins). In Saccharomyces cerevisiae (strain JAY291) (Baker's yeast), this protein is Putative glutamine--fructose-6-phosphate aminotransferase [isomerizing].